A 306-amino-acid polypeptide reads, in one-letter code: Glutamyl-Q tRNA(Asp) synthetase (306 aa).

L-glutamate contacts are provided by residues 29–33 and D65; that span reads RFAPS. The 'HIGH' region signature appears at 32-42; that stretch reads PSPTGPLHLGN. Zn(2+) is bound by residues C121, C123, Y141, and C145. L-glutamate contacts are provided by Y188 and R206. The short motif at 244–248 is the 'KMSKS' region element; that stretch reads KLAKR. K247 contributes to the ATP binding site.

Belongs to the class-I aminoacyl-tRNA synthetase family. GluQ subfamily. Requires Zn(2+) as cofactor.

Its function is as follows. Catalyzes the tRNA-independent activation of glutamate in presence of ATP and the subsequent transfer of glutamate onto a tRNA(Asp). Glutamate is transferred on the 2-amino-5-(4,5-dihydroxy-2-cyclopenten-1-yl) moiety of the queuosine in the wobble position of the QUC anticodon. The chain is Glutamyl-Q tRNA(Asp) synthetase from Prochlorococcus marinus (strain MIT 9303).